A 104-amino-acid chain; its full sequence is Intracellular chorismate mutase (104 aa).

Residues 23 to 104 (AVPEIDDLRR…LRLGRGRLGY (82 aa)) form the Chorismate mutase domain. Chorismate-binding residues include Arg-59, Val-68, and Glu-72.

In terms of assembly, homodimer. Probably interacts with AroG (MSMEG_4244).

It is found in the cytoplasm. It carries out the reaction chorismate = prephenate. It participates in metabolic intermediate biosynthesis; prephenate biosynthesis; prephenate from chorismate: step 1/1. Its activity is regulated as follows. The formation of the complex with AroG activates the chorismate mutase activity. In terms of biological role, catalyzes the Claisen rearrangement of chorismate to prephenate. Probably involved in the aromatic amino acid biosynthesis. This chain is Intracellular chorismate mutase, found in Mycolicibacterium smegmatis (strain ATCC 700084 / mc(2)155) (Mycobacterium smegmatis).